A 152-amino-acid chain; its full sequence is Flagellar assembly factor FliW (152 aa).

Belongs to the FliW family. In terms of assembly, interacts with translational regulator CsrA and flagellin(s).

The protein localises to the cytoplasm. Its function is as follows. Acts as an anti-CsrA protein, binds CsrA and prevents it from repressing translation of its target genes, one of which is flagellin. Binds to flagellin and participates in the assembly of the flagellum. The sequence is that of Flagellar assembly factor FliW from Caldicellulosiruptor bescii (strain ATCC BAA-1888 / DSM 6725 / KCTC 15123 / Z-1320) (Anaerocellum thermophilum).